Consider the following 132-residue polypeptide: Fluoride-specific ion channel FluC 1 (132 aa).

Transmembrane regions (helical) follow at residues 11–31 (AVFA…ALAI), 37–57 (WPWP…YFTT), 70–92 (RPLL…VETI), and 105–125 (AYSV…TVLV). Residues glycine 79 and threonine 82 each coordinate Na(+).

This sequence belongs to the fluoride channel Fluc/FEX (TC 1.A.43) family.

Its subcellular location is the cell membrane. The catalysed reaction is fluoride(in) = fluoride(out). With respect to regulation, na(+) is not transported, but it plays an essential structural role and its presence is essential for fluoride channel function. Fluoride-specific ion channel. Important for reducing fluoride concentration in the cell, thus reducing its toxicity. The protein is Fluoride-specific ion channel FluC 1 of Mycobacterium bovis (strain ATCC BAA-935 / AF2122/97).